The chain runs to 280 residues: RAD52 motif-containing protein 1 (280 aa).

The region spanning 18–101 is the RRM domain; sequence KTIFIWDIQP…SPLKVRLSTK (84 aa).

In terms of assembly, homodimer.

The protein resides in the nucleus. The protein localises to the cytoplasm. Its subcellular location is the nucleolus. May confer resistance to the antitumor agent cisplatin. Binds to DNA and RNA. The chain is RAD52 motif-containing protein 1 (rdm1) from Danio rerio (Zebrafish).